We begin with the raw amino-acid sequence, 415 residues long: Esterase FrsA (415 aa).

This sequence belongs to the FrsA family.

The enzyme catalyses a carboxylic ester + H2O = an alcohol + a carboxylate + H(+). In terms of biological role, catalyzes the hydrolysis of esters. This is Esterase FrsA from Serratia proteamaculans (strain 568).